The chain runs to 176 residues: Lipoprotein signal peptidase (176 aa).

4 helical membrane passes run 11–31 (AFVA…LDQL), 38–58 (ATMQ…VLVF), 76–96 (WFFT…MHQH), and 101–121 (LLPA…VDRL). Active-site residues include aspartate 128 and aspartate 146. The helical transmembrane segment at 139-159 (WPAFNLADSAITLGVGLMLWA) threads the bilayer.

This sequence belongs to the peptidase A8 family.

The protein resides in the cell inner membrane. The enzyme catalyses Release of signal peptides from bacterial membrane prolipoproteins. Hydrolyzes -Xaa-Yaa-Zaa-|-(S,diacylglyceryl)Cys-, in which Xaa is hydrophobic (preferably Leu), and Yaa (Ala or Ser) and Zaa (Gly or Ala) have small, neutral side chains.. The protein operates within protein modification; lipoprotein biosynthesis (signal peptide cleavage). Functionally, this protein specifically catalyzes the removal of signal peptides from prolipoproteins. The chain is Lipoprotein signal peptidase from Azoarcus sp. (strain BH72).